The chain runs to 229 residues: Large ribosomal subunit protein uL1 (229 aa).

This sequence belongs to the universal ribosomal protein uL1 family. Part of the 50S ribosomal subunit.

Binds directly to 23S rRNA. The L1 stalk is quite mobile in the ribosome, and is involved in E site tRNA release. Its function is as follows. Protein L1 is also a translational repressor protein, it controls the translation of the L11 operon by binding to its mRNA. The polypeptide is Large ribosomal subunit protein uL1 (Listeria monocytogenes serovar 1/2a (strain ATCC BAA-679 / EGD-e)).